We begin with the raw amino-acid sequence, 473 residues long: Digalactosyldiacylglycerol synthase 2, chloroplastic (473 aa).

Interaction with the membrane lipid bilayer stretches follow at residues 130–148 (LTWF…YVIG) and 227–245 (QPFT…SKGY).

It belongs to the glycosyltransferase group 1 family. Glycosyltransferase 4 subfamily. As to expression, expressed in leaves, flowers and roots, but not in stems and siliques.

The protein localises to the plastid. It localises to the chloroplast outer membrane. It carries out the reaction a 1,2-diacyl-3-O-(beta-D-galactosyl)-sn-glycerol + UDP-alpha-D-galactose = a 1,2-diacyl-3-O-[alpha-D-galactosyl-(1-&gt;6)-beta-D-galactosyl]-sn-glycerol + UDP + H(+). Its activity is regulated as follows. Stimulated by anionic phospholipids. In terms of biological role, involved in the synthesis of diacylglycerol galactolipids that are specifically found in thylakoid membranes. Specific for alpha-glycosidic linkages. During phosphate shortage, involved in the biosynthesis of digalactosyldiacylglycerol (DGDG) which rescues the limitation of phospholipids. This Arabidopsis thaliana (Mouse-ear cress) protein is Digalactosyldiacylglycerol synthase 2, chloroplastic.